Consider the following 336-residue polypeptide: Large ribosomal subunit protein uL1 (336 aa).

Residues 1-245 (MANQKKVTNK…VKKTAKGKVI (245 aa)) are large ribosomal subunit protein uL1. The tract at residues 246 to 336 (ADDSAKGENK…DVKKAKTSKK (91 aa)) is unknown. The segment at 267-336 (AQKKKPSKHP…DVKKAKTSKK (70 aa)) is disordered. Basic residues predominate over residues 286-305 (KKKKVKKILKKAKPAKKAAV). Residues 306–315 (AKKPVVVNKK) show a composition bias toward low complexity.

This sequence belongs to the universal ribosomal protein uL1 family. In terms of assembly, part of the 50S ribosomal subunit.

In terms of biological role, binds directly to 23S rRNA. The L1 stalk is quite mobile in the ribosome, and is involved in E site tRNA release. Its function is as follows. Protein L1 is also a translational repressor protein, it controls the translation of the L11 operon by binding to its mRNA. The chain is Large ribosomal subunit protein uL1 from Malacoplasma penetrans (strain HF-2) (Mycoplasma penetrans).